The primary structure comprises 347 residues: 3-isopropylmalate dehydrogenase (347 aa).

Residues arginine 94, arginine 104, arginine 128, and aspartate 219 each contribute to the substrate site. Residues aspartate 219, aspartate 243, and aspartate 247 each contribute to the Mg(2+) site. 279–291 is an NAD(+) binding site; it reads GSAPDIAGQGKAD.

It belongs to the isocitrate and isopropylmalate dehydrogenases family. LeuB type 2 subfamily. In terms of assembly, homodimer. Mg(2+) serves as cofactor. Requires Mn(2+) as cofactor.

Its subcellular location is the cytoplasm. The catalysed reaction is (2R,3S)-3-isopropylmalate + NAD(+) = 4-methyl-2-oxopentanoate + CO2 + NADH. It participates in amino-acid biosynthesis; L-leucine biosynthesis; L-leucine from 3-methyl-2-oxobutanoate: step 3/4. In terms of biological role, catalyzes the oxidation of 3-carboxy-2-hydroxy-4-methylpentanoate (3-isopropylmalate) to 3-carboxy-4-methyl-2-oxopentanoate. The product decarboxylates to 4-methyl-2 oxopentanoate. This is 3-isopropylmalate dehydrogenase from Streptomyces coelicolor (strain ATCC BAA-471 / A3(2) / M145).